The primary structure comprises 281 residues: NAD-dependent protein deacetylase 3 (281 aa).

The 281-residue stretch at 1–281 folds into the Deacetylase sirtuin-type domain; that stretch reads MLDSPTLDLL…PWLAEQLITR (281 aa). NAD(+) contacts are provided by residues 27-47 and 105-108; these read GAGI…GVRR and QNVD. H123 (proton acceptor) is an active-site residue. The Zn(2+) site is built by C131, C134, C182, and C185. NAD(+) is bound by residues 223-225, 249-251, and C267; these read GTS and NHG.

Belongs to the sirtuin family. Class II subfamily. Zn(2+) serves as cofactor.

It is found in the cytoplasm. It carries out the reaction N(6)-acetyl-L-lysyl-[protein] + NAD(+) + H2O = 2''-O-acetyl-ADP-D-ribose + nicotinamide + L-lysyl-[protein]. NAD-dependent protein deacetylase which modulates the activities of several enzymes which are inactive in their acetylated form. The sequence is that of NAD-dependent protein deacetylase 3 from Pseudomonas syringae pv. tomato (strain ATCC BAA-871 / DC3000).